A 661-amino-acid polypeptide reads, in one-letter code: UvrABC system protein B (661 aa).

One can recognise a Helicase ATP-binding domain in the interval 25 to 182 (AGLNSKKRSQ…NDLINLQYKR (158 aa)). Residue 38-45 (GITGSGKT) participates in ATP binding. The short motif at 91 to 114 (YYDYYQPEAYIARTDTFIEKDSSI) is the Beta-hairpin element. A Helicase C-terminal domain is found at 430–592 (QVEDLISEIQ…IIPKTINRAI (163 aa)). One can recognise a UVR domain in the interval 621-656 (KANINKLNKEMLKAASNLEFEQAAKLRDQLKTLEAA).

It belongs to the UvrB family. Forms a heterotetramer with UvrA during the search for lesions. Interacts with UvrC in an incision complex.

It is found in the cytoplasm. The UvrABC repair system catalyzes the recognition and processing of DNA lesions. A damage recognition complex composed of 2 UvrA and 2 UvrB subunits scans DNA for abnormalities. Upon binding of the UvrA(2)B(2) complex to a putative damaged site, the DNA wraps around one UvrB monomer. DNA wrap is dependent on ATP binding by UvrB and probably causes local melting of the DNA helix, facilitating insertion of UvrB beta-hairpin between the DNA strands. Then UvrB probes one DNA strand for the presence of a lesion. If a lesion is found the UvrA subunits dissociate and the UvrB-DNA preincision complex is formed. This complex is subsequently bound by UvrC and the second UvrB is released. If no lesion is found, the DNA wraps around the other UvrB subunit that will check the other stand for damage. The protein is UvrABC system protein B of Rickettsia akari (strain Hartford).